The primary structure comprises 332 residues: Ectoine dioxygenase (332 aa).

The segment covering 1–10 (MSVQTSSNRP) has biased composition (polar residues). The interval 1–47 (MSVQTSSNRPLPQANLHIATETPEADSRIRSAPRPGQDPYPTRLSEP) is disordered. Gln163 is an L-ectoine binding site. Position 169 (Lys169) interacts with 2-oxoglutarate. Residues His180, Asp182, and His281 each contribute to the Fe cation site.

Belongs to the PhyH family. EctD subfamily. As to quaternary structure, homodimer. Requires Fe(2+) as cofactor.

It catalyses the reaction L-ectoine + 2-oxoglutarate + O2 = 5-hydroxyectoine + succinate + CO2. Its function is as follows. Involved in the biosynthesis of 5-hydroxyectoine, called compatible solute, which helps organisms to survive extreme osmotic stress by acting as a highly soluble organic osmolyte. Catalyzes the 2-oxoglutarate-dependent selective hydroxylation of L-ectoine to yield (4S,5S)-5-hydroxyectoine. This is Ectoine dioxygenase from Halomonas elongata (strain ATCC 33173 / DSM 2581 / NBRC 15536 / NCIMB 2198 / 1H9).